The primary structure comprises 160 residues: Ribosomal RNA large subunit methyltransferase H (160 aa).

Residues Gly-108 and Phe-127–Trp-132 each bind S-adenosyl-L-methionine.

The protein belongs to the RNA methyltransferase RlmH family. In terms of assembly, homodimer.

It localises to the cytoplasm. It catalyses the reaction pseudouridine(1915) in 23S rRNA + S-adenosyl-L-methionine = N(3)-methylpseudouridine(1915) in 23S rRNA + S-adenosyl-L-homocysteine + H(+). Specifically methylates the pseudouridine at position 1915 (m3Psi1915) in 23S rRNA. The sequence is that of Ribosomal RNA large subunit methyltransferase H from Bartonella bacilliformis (strain ATCC 35685 / KC583 / Herrer 020/F12,63).